The chain runs to 233 residues: tRNA (guanine-N(7)-)-methyltransferase (233 aa).

Glutamate 62, glutamate 87, aspartate 116, and aspartate 138 together coordinate S-adenosyl-L-methionine. Residue aspartate 138 is part of the active site. Residues lysine 142, aspartate 174, and 212–215 (TRYE) contribute to the substrate site.

This sequence belongs to the class I-like SAM-binding methyltransferase superfamily. TrmB family.

The enzyme catalyses guanosine(46) in tRNA + S-adenosyl-L-methionine = N(7)-methylguanosine(46) in tRNA + S-adenosyl-L-homocysteine. It functions in the pathway tRNA modification; N(7)-methylguanine-tRNA biosynthesis. Catalyzes the formation of N(7)-methylguanine at position 46 (m7G46) in tRNA. The protein is tRNA (guanine-N(7)-)-methyltransferase of Bartonella henselae (strain ATCC 49882 / DSM 28221 / CCUG 30454 / Houston 1) (Rochalimaea henselae).